Consider the following 363-residue polypeptide: Phosphoserine aminotransferase (363 aa).

Arg-41 contributes to the L-glutamate binding site. Pyridoxal 5'-phosphate-binding positions include 75 to 76 (AS), Trp-100, Thr-155, Asp-175, and Gln-198. Residue Lys-199 is modified to N6-(pyridoxal phosphate)lysine. 239–240 (NT) contacts pyridoxal 5'-phosphate.

This sequence belongs to the class-V pyridoxal-phosphate-dependent aminotransferase family. SerC subfamily. In terms of assembly, homodimer. Pyridoxal 5'-phosphate is required as a cofactor.

The protein localises to the cytoplasm. It catalyses the reaction O-phospho-L-serine + 2-oxoglutarate = 3-phosphooxypyruvate + L-glutamate. The enzyme catalyses 4-(phosphooxy)-L-threonine + 2-oxoglutarate = (R)-3-hydroxy-2-oxo-4-phosphooxybutanoate + L-glutamate. Its pathway is amino-acid biosynthesis; L-serine biosynthesis; L-serine from 3-phospho-D-glycerate: step 2/3. Functionally, catalyzes the reversible conversion of 3-phosphohydroxypyruvate to phosphoserine and of 3-hydroxy-2-oxo-4-phosphonooxybutanoate to phosphohydroxythreonine. The chain is Phosphoserine aminotransferase from Streptococcus agalactiae serotype III (strain NEM316).